We begin with the raw amino-acid sequence, 73 residues long: MAKKDGVIELEGSVLEALPNATFRVELSNGHKVLAHISGRMRQHYIRILPEDRVVVELSPYDLARGRIVYRYK.

In terms of domain architecture, S1-like spans 1 to 73; that stretch reads MAKKDGVIEL…ARGRIVYRYK (73 aa).

This sequence belongs to the IF-1 family. In terms of assembly, component of the 30S ribosomal translation pre-initiation complex which assembles on the 30S ribosome in the order IF-2 and IF-3, IF-1 and N-formylmethionyl-tRNA(fMet); mRNA recruitment can occur at any time during PIC assembly.

It is found in the cytoplasm. Functionally, one of the essential components for the initiation of protein synthesis. Stabilizes the binding of IF-2 and IF-3 on the 30S subunit to which N-formylmethionyl-tRNA(fMet) subsequently binds. Helps modulate mRNA selection, yielding the 30S pre-initiation complex (PIC). Upon addition of the 50S ribosomal subunit IF-1, IF-2 and IF-3 are released leaving the mature 70S translation initiation complex. In Tropheryma whipplei (strain TW08/27) (Whipple's bacillus), this protein is Translation initiation factor IF-1.